The primary structure comprises 212 residues: Methylthioribulose-1-phosphate dehydratase (212 aa).

Zn(2+) contacts are provided by His97 and His99.

This sequence belongs to the aldolase class II family. MtnB subfamily. In terms of assembly, homotetramer. Zn(2+) serves as cofactor.

It catalyses the reaction 5-(methylsulfanyl)-D-ribulose 1-phosphate = 5-methylsulfanyl-2,3-dioxopentyl phosphate + H2O. The protein operates within amino-acid biosynthesis; L-methionine biosynthesis via salvage pathway; L-methionine from S-methyl-5-thio-alpha-D-ribose 1-phosphate: step 2/6. Functionally, catalyzes the dehydration of methylthioribulose-1-phosphate (MTRu-1-P) into 2,3-diketo-5-methylthiopentyl-1-phosphate (DK-MTP-1-P). This chain is Methylthioribulose-1-phosphate dehydratase, found in Bacillus cereus (strain AH187).